We begin with the raw amino-acid sequence, 113 residues long: uncharacterized protein (113 aa).

The first 29 residues, Met1 to Leu29, serve as a signal peptide directing secretion. 2 helical membrane-spanning segments follow: residues Thr34–Phe54 and Gln56–Phe76.

The protein localises to the membrane. This is an uncharacterized protein from Saccharomyces cerevisiae (strain ATCC 204508 / S288c) (Baker's yeast).